The chain runs to 85 residues: Large ribosomal subunit protein bL27 (85 aa).

Residues 1–22 (MAHKKAGGSTRNGRDSEAKRMG) form a disordered region.

Belongs to the bacterial ribosomal protein bL27 family.

The sequence is that of Large ribosomal subunit protein bL27 from Escherichia coli O6:K15:H31 (strain 536 / UPEC).